The sequence spans 228 residues: Probable endo-1,4-beta-xylanase A (228 aa).

The signal sequence occupies residues 1–18 (MVSFSYLLLACSAIGALA). An N-linked (GlcNAc...) asparagine glycan is attached at asparagine 29. The 189-residue stretch at 40-228 (AGTPSSTGWN…SSGSASITVY (189 aa)) folds into the GH11 domain. Catalysis depends on glutamate 124, which acts as the Nucleophile. Residue glutamate 215 is the Proton donor of the active site.

Belongs to the glycosyl hydrolase 11 (cellulase G) family.

The protein localises to the secreted. The enzyme catalyses Endohydrolysis of (1-&gt;4)-beta-D-xylosidic linkages in xylans.. Its pathway is glycan degradation; xylan degradation. Functionally, endo-1,4-beta-xylanase involved in the hydrolysis of xylan, a major structural heterogeneous polysaccharide found in plant biomass representing the second most abundant polysaccharide in the biosphere, after cellulose. This chain is Probable endo-1,4-beta-xylanase A (xlnA), found in Aspergillus fumigatus (strain CBS 144.89 / FGSC A1163 / CEA10) (Neosartorya fumigata).